The chain runs to 80 residues: Small, acid-soluble spore protein Tlp (80 aa).

Basic and acidic residues predominate over residues 34 to 73 (AKESMEFATDEEKQRIQEKNARRNESIESFRSEIQDESAA). The disordered stretch occupies residues 34–80 (AKESMEFATDEEKQRIQEKNARRNESIESFRSEIQDESAARENGYQS).

Belongs to the Tlp family.

It localises to the spore core. In Bacillus velezensis (strain DSM 23117 / BGSC 10A6 / LMG 26770 / FZB42) (Bacillus amyloliquefaciens subsp. plantarum), this protein is Small, acid-soluble spore protein Tlp.